A 226-amino-acid chain; its full sequence is KFGVEANIGAPQVAYRETIRKAVKAEYKHAKQSGGKGQYGHVVIEMEPMEPGGEGYEFIDEIKGGVIPREFIRLSIKVSAILAYRYRCRLSVVDVRIRLVFGSYHDVDSSQLAFELAASQAFKEGMRQASPALLEPIMAVEVETPEEYMGDVMGDLNRRRGVVLGMDDDGIGGKKVRAEVPLAEMFGYSTDLRSATQGRATYSMEFKKYSEAPAHIAAAVTEARKG.

Belongs to the GTP-binding elongation factor family. EF-G/EF-2 subfamily.

It is found in the cytoplasm. In terms of biological role, catalyzes the GTP-dependent ribosomal translocation step during translation elongation. During this step, the ribosome changes from the pre-translocational (PRE) to the post-translocational (POST) state as the newly formed A-site-bound peptidyl-tRNA and P-site-bound deacylated tRNA move to the P and E sites, respectively. Catalyzes the coordinated movement of the two tRNA molecules, the mRNA and conformational changes in the ribosome. The sequence is that of Elongation factor G (fusA) from Neisseria gonorrhoeae.